The chain runs to 123 residues: Large ribosomal subunit protein uL29 (123 aa).

It belongs to the universal ribosomal protein uL29 family. As to quaternary structure, component of the large ribosomal subunit.

Its subcellular location is the cytoplasm. In terms of biological role, component of the large ribosomal subunit. The ribosome is a large ribonucleoprotein complex responsible for the synthesis of proteins in the cell. The protein is Large ribosomal subunit protein uL29 (rpl35) of Platichthys flesus (European flounder).